The following is a 228-amino-acid chain: MAIIKYLGHSAFEIVLTGLDGAEKTILIDPWIENPLSPVKLSDYKNRKIDYIFVTHDHGDHLGNAIEIAKETGAKIVGIFEIALYAREKGVQSIDGNIGGKLNIPDLFAVLTPAWHSSNRGAPTGVVVGGKDVTIYHAGDTGLFMEMSLIGELYGPDIALLPIGGHYTMGVKEAVKAVQLIRPKIAIPMHYNTFTPIKADPEEFKKLVESTTPTKVVILKPGETFTYP.

This sequence belongs to the UPF0173 family.

In Staphylothermus marinus (strain ATCC 43588 / DSM 3639 / JCM 9404 / F1), this protein is UPF0173 metal-dependent hydrolase Smar_0891.